We begin with the raw amino-acid sequence, 735 residues long: Wall-associated receptor kinase 1 (735 aa).

Residues 1-24 (MKVQEGLFLVAIFFSLACTQLVKG) form the signal peptide. Residues 25–331 (QHQPGENCQN…TTTMSCKRKE (307 aa)) are Extracellular-facing. N-linked (GlcNAc...) asparagine glycans are attached at residues asparagine 38, asparagine 56, asparagine 80, asparagine 90, asparagine 113, asparagine 140, asparagine 209, asparagine 235, and asparagine 250. Positions 67-254 (RPHVLSDIEV…SICGGNSTCL (188 aa)) are polygalacturonic acid-binding. The 48-residue stretch at 234–281 (GNQTCEQVGSTSICGGNSTCLDSTPRNGYICRCNEGFDGNPYLSAGCQ) folds into the EGF-like 1 domain. 6 disulfide bridges follow: cysteine 238/cysteine 253, cysteine 247/cysteine 264, cysteine 266/cysteine 280, cysteine 286/cysteine 303, cysteine 297/cysteine 312, and cysteine 314/cysteine 327. The 47-residue stretch at 282 to 328 (DVNECTTSSTIHRHNCSDPKTCRNKVGGFYCKCQSGYRLDTTTMSCK) folds into the EGF-like 2; calcium-binding domain. Asparagine 296 is a glycosylation site (N-linked (GlcNAc...) asparagine). A helical membrane pass occupies residues 332 to 352 (FAWTTILLVTTIGFLVILLGV). The Cytoplasmic portion of the chain corresponds to 353 to 735 (ACIQQRMKHL…VAILDIETGR (383 aa)). A Phosphothreonine modification is found at threonine 398. Residues 409 to 692 (YAESRILGQG…RVEKTKHKWS (284 aa)) enclose the Protein kinase domain. ATP contacts are provided by residues 415–423 (LGQGGQGTV) and lysine 437. The residue at position 482 (tyrosine 482) is a Phosphotyrosine. The active-site Proton acceptor is the aspartate 534. Phosphothreonine is present on residues threonine 568 and threonine 573. Phosphotyrosine is present on tyrosine 581.

It belongs to the protein kinase superfamily. Ser/Thr protein kinase family. As to quaternary structure, interacts with the glycine-rich proteins GRP3 and GRP3S, and the type 2C protein phosphatase KAPP. Component of a 500 kDa complex, composed of WAK1, GRP3 and KAPP. Interacts with the oxygen-evolving enhancer protein 2 (OEE2). In terms of tissue distribution, predominantly expressed in green tissues such as stems and leaves. Detected at organ junctions.

It localises to the membrane. It carries out the reaction L-seryl-[protein] + ATP = O-phospho-L-seryl-[protein] + ADP + H(+). It catalyses the reaction L-threonyl-[protein] + ATP = O-phospho-L-threonyl-[protein] + ADP + H(+). Functionally, serine/threonine-protein kinase that may function as a signaling receptor of extracellular matrix component. Binding to pectin may have significance in the control of cell expansion, morphogenesis and development. Required during plant's response to pathogen infection and in plant defense against heavy metal toxicity. Phosphorylates the oxygen-evolving enhancer protein 2 (OEE2) in an GRP-3-dependent manner. The chain is Wall-associated receptor kinase 1 (WAK1) from Arabidopsis thaliana (Mouse-ear cress).